Reading from the N-terminus, the 281-residue chain is Protease HtpX homolog (281 aa).

The next 2 membrane-spanning stretches (helical) occupy residues 6 to 26 (VWLL…AIGG) and 28 to 48 (SGAL…YYYS). Position 130 (H130) interacts with Zn(2+). E131 is a catalytic residue. A Zn(2+)-binding site is contributed by H134. A run of 2 helical transmembrane segments spans residues 140–160 (VLIG…SNIV) and 181–201 (IASL…QLAI). Residue E206 coordinates Zn(2+).

This sequence belongs to the peptidase M48B family. Zn(2+) serves as cofactor.

The protein resides in the cell membrane. The sequence is that of Protease HtpX homolog from Pelotomaculum thermopropionicum (strain DSM 13744 / JCM 10971 / SI).